A 122-amino-acid chain; its full sequence is Nuclear transport factor 2A (122 aa).

At methionine 1 the chain carries N-acetylmethionine. Residues 6–119 (VAKAFVEHYY…YYVFNDIFRL (114 aa)) form the NTF2 domain.

As to quaternary structure, interacts with RAN1. As to expression, expressed in roots, stems, leaves and flowers, and, at low levels, in siliques.

The protein localises to the cytoplasm. The protein resides in the nucleus. Its subcellular location is the nucleus envelope. Functionally, facilitates protein transport into the nucleus. Interacts with various nucleoporins and with Ran-GDP. Could be part of a multicomponent system of cytosolic factors that assemble at the pore complex during nuclear import. The sequence is that of Nuclear transport factor 2A from Arabidopsis thaliana (Mouse-ear cress).